A 707-amino-acid polypeptide reads, in one-letter code: Elongation factor G (707 aa).

The tr-type G domain occupies 8-297 (ERVRNIGIAA…AVLDYLPSPL (290 aa)). GTP is bound by residues 17–24 (AHIDAGKT), 96–100 (DTPGH), and 150–153 (NKMD).

This sequence belongs to the TRAFAC class translation factor GTPase superfamily. Classic translation factor GTPase family. EF-G/EF-2 subfamily.

The protein localises to the cytoplasm. Functionally, catalyzes the GTP-dependent ribosomal translocation step during translation elongation. During this step, the ribosome changes from the pre-translocational (PRE) to the post-translocational (POST) state as the newly formed A-site-bound peptidyl-tRNA and P-site-bound deacylated tRNA move to the P and E sites, respectively. Catalyzes the coordinated movement of the two tRNA molecules, the mRNA and conformational changes in the ribosome. This chain is Elongation factor G, found in Gloeobacter violaceus (strain ATCC 29082 / PCC 7421).